We begin with the raw amino-acid sequence, 451 residues long: MGLEPSWYLLLCLAVSGAAGTDPPTAPTTAERQRQPTDIILDCFLVTEDRHRGAFASSGDRERALLVLKQVPVLDDGSLEGITDFQGSTETKQDSPVIFEASVDLVQIPQAEALLHADCSGKAVTCEISKYFLQARQEATFEKAHWFISNMQVSRGGPSVSMVMKTLRDAEVGAVRHPTLNLPLSAQGTVKTQVEFQVTSETQTLNHLLGSSVSLHCSFSMAPGLDLTGVEWRLQHKGSGQLVYSWKTGQGQAKRKGATLEPEELLRAGNASLTLPNLTLKDEGNYICQISTSLYQAQQIMPLNILAPPKIQLHLANKDPLPSLVCSIAGYYPLDVGVTWIREELGGIPAQVSGASFSSLRQSTMGTYSISSTVMADPGPTGATYTCQVAHVSLEEPLTTSMRVLPNPEQRGTLGVIFASIIFLSALLLFLGLHRQQASSSRSTRPMRHSG.

Residues 1-20 (MGLEPSWYLLLCLAVSGAAG) form the signal peptide. Residues 21-412 (TDPPTAPTTA…RVLPNPEQRG (392 aa)) are Lumenal-facing. An Ig-like V-type domain is found at 196–301 (FQVTSETQTL…TSLYQAQQIM (106 aa)). Disulfide bonds link Cys217–Cys288 and Cys326–Cys387. 2 N-linked (GlcNAc...) asparagine glycosylation sites follow: Asn270 and Asn277. The 98-residue stretch at 302 to 399 (PLNILAPPKI…AHVSLEEPLT (98 aa)) folds into the Ig-like C1-type domain. A helical membrane pass occupies residues 413-433 (TLGVIFASIIFLSALLLFLGL). Topologically, residues 434 to 451 (HRQQASSSRSTRPMRHSG) are cytoplasmic.

Interacts with peptide-free HLA-A*02-B2M complexes or those loaded with low affinity peptides, likely facilitating peptide exchange onto higher affinity peptides. Interacts with MR1 in a ligand-independent way; this interaction may stabilize MR1 pool and facilitate ligand loading and dissociation. In terms of tissue distribution, widely expressed.

The protein localises to the cell membrane. Its subcellular location is the endoplasmic reticulum membrane. It localises to the microsome membrane. It is found in the golgi apparatus membrane. Component of the antigen processing and presentation pathway, which binds to MHC class I coupled with beta2-microglobulin/B2M. Association between TAPBPR and MHC class I occurs in the absence of a functional peptide-loading complex (PLC). Expression seems to slow down and down-regulate MHC class I surface expression. This is Tapasin-related protein (Tapbpl) from Mus musculus (Mouse).